Reading from the N-terminus, the 134-residue chain is Profilin-1 (134 aa).

A disulfide bridge links Cys13 with Cys118. Positions 84–100 match the Involved in PIP2 interaction motif; sequence AVIRGKKGSGGITIKKT. Thr114 is modified (phosphothreonine).

This sequence belongs to the profilin family. As to quaternary structure, occurs in many kinds of cells as a complex with monomeric actin in a 1:1 ratio. Post-translationally, phosphorylated by MAP kinases.

The protein resides in the cytoplasm. The protein localises to the cytoskeleton. In terms of biological role, binds to actin and affects the structure of the cytoskeleton. At high concentrations, profilin prevents the polymerization of actin, whereas it enhances it at low concentrations. The protein is Profilin-1 of Olea europaea (Common olive).